The sequence spans 278 residues: HTH-type transcriptional activator RhaS (278 aa).

The HTH araC/xylS-type domain occupies 174–272 (NLLLAWLEDH…NWSPRDIRQG (99 aa)). DNA-binding regions (H-T-H motif) lie at residues 191–212 (DAVADQFSLSLRTLHRQLKQQT) and 239–262 (VTDIAYRCGFSDSNHFSTLFRREF).

In terms of assembly, binds DNA as a dimer.

It localises to the cytoplasm. In terms of biological role, activates expression of the rhaBAD and rhaT operons. In Shigella dysenteriae serotype 1 (strain Sd197), this protein is HTH-type transcriptional activator RhaS.